The primary structure comprises 400 residues: Na(+)/H(+) antiporter NhaA (400 aa).

11 helical membrane passes run 10 to 30 (FNLE…AMII), 60 to 80 (AHHW…GLEL), 95 to 115 (IILP…VYLF), 126 to 146 (GWAI…SLLG), 155 to 175 (VFLV…IALF), 178 to 198 (NDLS…LYML), 218 to 238 (IAVL…ALFI), 265 to 285 (GILP…AGFG), 295 to 315 (IAAG…WLIF), 334 to 354 (AALL…LAFA), and 364 to 384 (LGII…LKTT).

It belongs to the NhaA Na(+)/H(+) (TC 2.A.33) antiporter family.

The protein localises to the cell inner membrane. The enzyme catalyses Na(+)(in) + 2 H(+)(out) = Na(+)(out) + 2 H(+)(in). Na(+)/H(+) antiporter that extrudes sodium in exchange for external protons. In Psychrobacter arcticus (strain DSM 17307 / VKM B-2377 / 273-4), this protein is Na(+)/H(+) antiporter NhaA.